We begin with the raw amino-acid sequence, 387 residues long: tRNA N6-adenosine threonylcarbamoyltransferase (387 aa).

The Fe cation site is built by His112 and His116. Substrate is bound by residues Leu134–Gly138, Asp167, Gly180, and Asn325. Asp353 contacts Fe cation.

Belongs to the KAE1 / TsaD family. Requires Fe(2+) as cofactor.

It localises to the cytoplasm. It carries out the reaction L-threonylcarbamoyladenylate + adenosine(37) in tRNA = N(6)-L-threonylcarbamoyladenosine(37) in tRNA + AMP + H(+). Required for the formation of a threonylcarbamoyl group on adenosine at position 37 (t(6)A37) in tRNAs that read codons beginning with adenine. Is involved in the transfer of the threonylcarbamoyl moiety of threonylcarbamoyl-AMP (TC-AMP) to the N6 group of A37, together with TsaE and TsaB. TsaD likely plays a direct catalytic role in this reaction. This Rickettsia prowazekii (strain Madrid E) protein is tRNA N6-adenosine threonylcarbamoyltransferase.